We begin with the raw amino-acid sequence, 270 residues long: MLPPLKKGWQATLDLRFHQAGGKTVLASAQHVGPLTVQRPFYPEEETCHLYLLHPPGGIVGGDELTISAHLAPGCHTLITMPGASKFYRSSGAQALVRQQLTLAPQATLEWLPQDAIFFPGANARLFTTFHLCASSRLLAWDLLCLGRPVIGETFSHGTLSNRLEVWVDNEPLLVERLHLQEGELSSIAERPWVGTLLCYPATDALLDGVRDALAPLGLYAGASLTDRLLTVRFLSDDNLICQRVMRDVWQFLRPHLTGKSPVLPRIWLT.

The protein belongs to the UreD family. As to quaternary structure, ureD, UreF and UreG form a complex that acts as a GTP-hydrolysis-dependent molecular chaperone, activating the urease apoprotein by helping to assemble the nickel containing metallocenter of UreC. The complex may form in the order UreABCD, UreABCDF, UreABCDFG. The UreE protein probably delivers the nickel in a GTPase-dependent fashion.

It is found in the cytoplasm. Its function is as follows. Necessary for the functional incorporation of the urease nickel metallocenter. The sequence is that of Urease accessory protein UreD from Klebsiella aerogenes (Enterobacter aerogenes).